Here is a 312-residue protein sequence, read N- to C-terminus: DNA-directed RNA polymerase subunit alpha (312 aa).

Residues 1–226 (MIEFEKPNIT…EHLNLFTNLT (226 aa)) are alpha N-terminal domain (alpha-NTD). Residues 243–312 (DDRILERTIE…DLGLGLKNDK (70 aa)) are alpha C-terminal domain (alpha-CTD).

The protein belongs to the RNA polymerase alpha chain family. Homodimer. The RNAP catalytic core consists of 2 alpha, 1 beta, 1 beta' and 1 omega subunit. When a sigma factor is associated with the core the holoenzyme is formed, which can initiate transcription.

The catalysed reaction is RNA(n) + a ribonucleoside 5'-triphosphate = RNA(n+1) + diphosphate. Its function is as follows. DNA-dependent RNA polymerase catalyzes the transcription of DNA into RNA using the four ribonucleoside triphosphates as substrates. The polypeptide is DNA-directed RNA polymerase subunit alpha (Streptococcus sanguinis (strain SK36)).